The primary structure comprises 132 residues: Pre-histone-like nucleoprotein (132 aa).

A propeptide spanning residues 2–23 is cleaved from the precursor; it reads AILISPSNNTGWGLGTHKLFGG. The short motif at 124-132 is the Nuclear localization signal element; sequence RRKRRVRSK.

The protein belongs to the adenoviridae histone-like nucleoprotein family. Interacts with the core-capsid bridging protein; this interaction bridges the virus core to the capsid. Interacts with host NPM1; this interaction might play a role in placing the pre-histone-like nucleoprotein on the viral DNA or regulating viral gene expression. Interacts with host HMGB1; this interaction inhibits host immune response. Post-translationally, cleaved near the N-terminus by the viral protease during virion maturation to form the mature protein.

It is found in the virion. The protein resides in the host nucleus. It localises to the host nucleolus. Plays a role in the inhibition of host immune response within the nucleus. Interacts with cellular nucleosomes and immobilizes the host immune danger signal HMGB1 on chromatin. In turn, prevents HMGB1 release out of the cell and thus decreases inflammation. Also plays a role in the wrapping and condensation of the viral DNA. May also promote viral genome import into the nucleus. The chain is Pre-histone-like nucleoprotein from Canine adenovirus serotype 1 (strain RI261) (CAdV-1).